The chain runs to 232 residues: Vesicle transport through interaction with t-SNAREs homolog 1B (232 aa).

Position 2 is an N-acetylalanine (Ala-2). 2 interaction with CLINT1 regions span residues 2–23 (ATSA…GLLE) and 69–73 (APLTF). Over 2–208 (ATSAASSEHF…SRKVITNKLL (207 aa)) the chain is Cytoplasmic. The stretch at 36-98 (AGTEEKKKLV…AKLHREVRST (63 aa)) forms a coiled coil. Position 103 is a phosphothreonine (Thr-103). Residue Arg-107 is modified to Omega-N-methylarginine. Phosphoserine is present on Ser-138. Residues 160–201 (GSEIIEELGEQRDQLERTKSRLVNTNENLSKSRKILRSMSRK) are a coiled coil. A helical; Anchor for type IV membrane protein transmembrane segment spans residues 209–229 (LSVIIVLELAILVGLVYYKFF). Residues 230-232 (RHH) lie on the Vesicular side of the membrane.

The protein belongs to the VTI1 family. Forms a SNARE complex with STX7, STX8 and VAMP8 which functions in the homotypic fusion of late endosomes. Component of the SNARE complex composed of STX7, STX8, VAMP7 and VIT1B that is required for heterotypic fusion of late endosomes with lysosomes. May interact with STX17. Interacts with CLINT1.

It is found in the early endosome membrane. Its subcellular location is the late endosome membrane. The protein localises to the lysosome membrane. The protein resides in the cytoplasmic granule. It localises to the recycling endosome membrane. Functionally, V-SNARE that mediates vesicle transport pathways through interactions with t-SNAREs on the target membrane. These interactions are proposed to mediate aspects of the specificity of vesicle trafficking and to promote fusion of the lipid bilayers. This chain is Vesicle transport through interaction with t-SNAREs homolog 1B (Vti1b), found in Rattus norvegicus (Rat).